The following is a 498-amino-acid chain: Inosine-5'-monophosphate dehydrogenase (498 aa).

2 consecutive CBS domains span residues 98–155 and 159–216; these read MVVN…EQKI and MTRE…PHAS. NAD(+) contacts are provided by residues D253 and 303–305; that span reads GIG. K(+) contacts are provided by G305 and G307. S308 contacts IMP. C310 contacts K(+). The active-site Thioimidate intermediate is the C310. IMP contacts are provided by residues 343–345, 366–367, and 390–394; these read DGG, GS, and YRGMG. Residue R406 is the Proton acceptor of the active site. E421 provides a ligand contact to IMP. K(+) is bound by residues E475, S476, and H477.

The protein belongs to the IMPDH/GMPR family. Homotetramer. It depends on K(+) as a cofactor.

It carries out the reaction IMP + NAD(+) + H2O = XMP + NADH + H(+). The protein operates within purine metabolism; XMP biosynthesis via de novo pathway; XMP from IMP: step 1/1. Its activity is regulated as follows. Mycophenolic acid (MPA) is a non-competitive inhibitor that prevents formation of the closed enzyme conformation by binding to the same site as the amobile flap. In contrast, mizoribine monophosphate (MZP) is a competitive inhibitor that induces the closed conformation. MPA is a potent inhibitor of mammalian IMPDHs but a poor inhibitor of the bacterial enzymes. MZP is a more potent inhibitor of bacterial IMPDH. Its function is as follows. Catalyzes the conversion of inosine 5'-phosphate (IMP) to xanthosine 5'-phosphate (XMP), the first committed and rate-limiting step in the de novo synthesis of guanine nucleotides, and therefore plays an important role in the regulation of cell growth. The sequence is that of Inosine-5'-monophosphate dehydrogenase from Rhizobium tropici.